Here is a 314-residue protein sequence, read N- to C-terminus: Methionyl-tRNA formyltransferase (314 aa).

110–113 contacts (6S)-5,6,7,8-tetrahydrofolate; that stretch reads SLLP.

This sequence belongs to the Fmt family.

It carries out the reaction L-methionyl-tRNA(fMet) + (6R)-10-formyltetrahydrofolate = N-formyl-L-methionyl-tRNA(fMet) + (6S)-5,6,7,8-tetrahydrofolate + H(+). Functionally, attaches a formyl group to the free amino group of methionyl-tRNA(fMet). The formyl group appears to play a dual role in the initiator identity of N-formylmethionyl-tRNA by promoting its recognition by IF2 and preventing the misappropriation of this tRNA by the elongation apparatus. The chain is Methionyl-tRNA formyltransferase from Bacillus cereus (strain G9842).